A 91-amino-acid chain; its full sequence is MFETITPLFPGLPGGPELLVVLLIVVLLFGANKIPKLARSSGQAIGEFQRGREEIEDELQDMTGDDDEDDATSESSADSVSTDSVSTESSN.

The chain crosses the membrane as a helical span at residues 9–29; that stretch reads FPGLPGGPELLVVLLIVVLLF. The disordered stretch occupies residues 48-91; sequence FQRGREEIEDELQDMTGDDDEDDATSESSADSVSTDSVSTESSN. A compositionally biased stretch (acidic residues) spans 54-72; sequence EIEDELQDMTGDDDEDDAT. Over residues 73 to 91 the composition is skewed to low complexity; sequence SESSADSVSTDSVSTESSN.

Belongs to the TatA/E family. In terms of assembly, forms a complex with TatC. Cytoplasmic and membrane-bound TatA form high-molecular-weight complexes.

Its subcellular location is the cell membrane. The protein localises to the cytoplasm. Part of the twin-arginine translocation (Tat) system that transports large folded proteins containing a characteristic twin-arginine motif in their signal peptide across membranes. TatA could form the protein-conducting channel of the Tat system. The protein is Sec-independent protein translocase protein TatAt of Haloferax volcanii (strain ATCC 29605 / DSM 3757 / JCM 8879 / NBRC 14742 / NCIMB 2012 / VKM B-1768 / DS2) (Halobacterium volcanii).